The chain runs to 351 residues: Beta-hexosaminidase (351 aa).

Substrate contacts are provided by residues aspartate 62, arginine 70, arginine 134, and 164-165; that span reads KH. Catalysis depends on histidine 177, which acts as the Proton donor/acceptor. The active-site Nucleophile is aspartate 249.

It belongs to the glycosyl hydrolase 3 family. NagZ subfamily.

The protein resides in the cytoplasm. The enzyme catalyses Hydrolysis of terminal non-reducing N-acetyl-D-hexosamine residues in N-acetyl-beta-D-hexosaminides.. Its pathway is cell wall biogenesis; peptidoglycan recycling. In terms of biological role, plays a role in peptidoglycan recycling by cleaving the terminal beta-1,4-linked N-acetylglucosamine (GlcNAc) from peptide-linked peptidoglycan fragments, giving rise to free GlcNAc, anhydro-N-acetylmuramic acid and anhydro-N-acetylmuramic acid-linked peptides. The chain is Beta-hexosaminidase from Histophilus somni (strain 129Pt) (Haemophilus somnus).